The chain runs to 216 residues: Small ribosomal subunit protein uS3c (216 aa).

One can recognise a KH type-2 domain in the interval 43 to 118; sequence IKNYIQKNRR…RLKIAITRVE (76 aa).

It belongs to the universal ribosomal protein uS3 family. Part of the 30S ribosomal subunit.

Its subcellular location is the plastid. It is found in the chloroplast. The chain is Small ribosomal subunit protein uS3c (rps3) from Dioscorea elephantipes (Elephant's foot yam).